The primary structure comprises 187 residues: dTTP/UTP pyrophosphatase (187 aa).

Catalysis depends on Asp65, which acts as the Proton acceptor.

This sequence belongs to the Maf family. YhdE subfamily. It depends on a divalent metal cation as a cofactor.

Its subcellular location is the cytoplasm. The enzyme catalyses dTTP + H2O = dTMP + diphosphate + H(+). The catalysed reaction is UTP + H2O = UMP + diphosphate + H(+). In terms of biological role, nucleoside triphosphate pyrophosphatase that hydrolyzes dTTP and UTP. May have a dual role in cell division arrest and in preventing the incorporation of modified nucleotides into cellular nucleic acids. This chain is dTTP/UTP pyrophosphatase, found in Deinococcus geothermalis (strain DSM 11300 / CIP 105573 / AG-3a).